A 341-amino-acid polypeptide reads, in one-letter code: Arfaptin-2 (341 aa).

Positions 46-84 (NETSIVSGGYGGSGDGLIPTGSGRHPSHSTSPSGPGDEV) are disordered. The segment covering 65–81 (TGSGRHPSHSTSPSGPG) has biased composition (low complexity). At Ser-72 the chain carries Phosphoserine. The AH domain maps to 121–321 (TVDLELELQI…NQKQLEQTLQ (201 aa)).

Forms homodimers or heterodimers with ARFIP1. Interacts with RAC1. Specifically binds to GTP-bound ARF1 and ARF6, but binds to RAC1.GTP and RAC1.GDP with similar affinities. Interacts with ARL1. Interacts (via N-terminus) with IKBKB and IKBKG; these interactions inhibit activation of NF-kappa-B.

The protein localises to the golgi apparatus. The protein resides in the trans-Golgi network membrane. Its function is as follows. Plays a role in constitutive metalloproteinase (MMP) secretion from the trans Golgi network. May have important functions during vesicle biogenesis at certain cargo subdomains, which could be predominantly utilized by secreted MMPs, such as MMP7 and MMP2. Also involved in autophagy by regulating the starvation-dependent trafficking of ATG9A vesicles which deliver the phosphatidylinositol 4-kinase beta (PI4KB) to the autophagosome initiation site. Involved in phagophore growth during mitophagy by regulating ATG9A trafficking to mitochondria. In addition, plays a role in NF-kappa-B inhibition by interacting with IKBKB and IKBKG. This is Arfaptin-2 from Mus musculus (Mouse).